A 110-amino-acid chain; its full sequence is MSDTLTRLAEVLEARKGAAPDSSYVASLYHKGLNKILEKVGEESVETILAAKDAAVSGDSSDLIYETADLWFHSLVMLAALGQHPQAVLDELDRRFGLSGHAEKAARPQT.

Belongs to the PRA-PH family.

The protein resides in the cytoplasm. The enzyme catalyses 1-(5-phospho-beta-D-ribosyl)-ATP + H2O = 1-(5-phospho-beta-D-ribosyl)-5'-AMP + diphosphate + H(+). The protein operates within amino-acid biosynthesis; L-histidine biosynthesis; L-histidine from 5-phospho-alpha-D-ribose 1-diphosphate: step 2/9. This chain is Phosphoribosyl-ATP pyrophosphatase, found in Stutzerimonas stutzeri (strain A1501) (Pseudomonas stutzeri).